Here is a 430-residue protein sequence, read N- to C-terminus: Cholecystokinin receptor type A (430 aa).

Topologically, residues 1-41 (MDVVDSLFVNGSNITSACELGFENETLFCLDRPRPSKEWQP) are extracellular. N-linked (GlcNAc...) asparagine glycosylation is found at N10, N13, and N24. A disulfide bridge links C18 with C29. Residues 42–67 (AVQILLYSLIFLLSVLGNTLVITVLI) form a helical membrane-spanning segment. Residues 68 to 77 (RNKRMRTVTN) are Cytoplasmic-facing. A helical transmembrane segment spans residues 78 to 104 (IFLLSLAVSDLMLCLFCMPFNLIPSLL). The Extracellular segment spans residues 105–115 (KDFIFGSAVCK). The cysteines at positions 114 and 196 are disulfide-linked. The chain crosses the membrane as a helical span at residues 116 to 137 (TTTYFMGTSVSVSTFNLVAISL). Residues 138–157 (ERYGAICKPLQSRVWQTKSH) are Cytoplasmic-facing. The chain crosses the membrane as a helical span at residues 158 to 178 (ALKVIAATWCLSFTIMTPYPI). At 179 to 210 (YSNLVPFTKNNNQTGNMCRFLLPNDVMQQTWH) the chain is on the extracellular side. N190 carries an N-linked (GlcNAc...) asparagine glycan. Residues 211-234 (TFLLLILFLIPGIVMMVAYGLISL) traverse the membrane as a helical segment. The Cytoplasmic segment spans residues 235 to 315 (ELYQGIKFDA…NLMAKKRVIR (81 aa)). The helical transmembrane segment at 316 to 336 (MLIVIVVLFFLCWMPIFSANA) threads the bilayer. Topologically, residues 337–351 (WRAYDTVSAERHLSG) are extracellular. Residues 352–375 (TPISFILLLSYTSSCVNPIIYCFM) form a helical membrane-spanning segment. At 376 to 430 (NKRFRLGFMATFPCCPNPGTPGVRGEMGEEEEGRTTGASLSRYSYSHMSTSAPPP) the chain is on the cytoplasmic side. C389 carries the S-palmitoyl cysteine lipid modification. The disordered stretch occupies residues 396-430 (PGVRGEMGEEEEGRTTGASLSRYSYSHMSTSAPPP). Positions 413–430 (ASLSRYSYSHMSTSAPPP) are enriched in polar residues.

The protein belongs to the G-protein coupled receptor 1 family.

The protein localises to the cell membrane. Functionally, receptor for cholecystokinin. Mediates pancreatic growth and enzyme secretion, smooth muscle contraction of the gall bladder and stomach. Has a 1000-fold higher affinity for CCK rather than for gastrin. It modulates feeding and dopamine-induced behavior in the central and peripheral nervous system. This receptor mediates its action by association with G proteins that activate a phosphatidylinositol-calcium second messenger system. In Cavia porcellus (Guinea pig), this protein is Cholecystokinin receptor type A (CCKAR).